A 497-amino-acid polypeptide reads, in one-letter code: Glycerol kinase (497 aa).

T13 provides a ligand contact to ADP. ATP is bound by residues T13, T14, and S15. T13 lines the sn-glycerol 3-phosphate pocket. R17 contacts ADP. Residues R83, E84, and Y135 each coordinate sn-glycerol 3-phosphate. Glycerol-binding residues include R83, E84, and Y135. H231 carries the phosphohistidine; by HPr modification. Position 245 (D245) interacts with sn-glycerol 3-phosphate. Residues D245 and Q246 each contribute to the glycerol site. Residues T267 and G310 each contribute to the ADP site. Positions 267, 310, 314, and 411 each coordinate ATP. Positions 411 and 415 each coordinate ADP.

It belongs to the FGGY kinase family. In terms of assembly, homotetramer and homodimer (in equilibrium). The phosphoenolpyruvate-dependent sugar phosphotransferase system (PTS), including enzyme I, and histidine-containing protein (HPr) are required for the phosphorylation, which leads to the activation of the enzyme.

The catalysed reaction is glycerol + ATP = sn-glycerol 3-phosphate + ADP + H(+). The protein operates within polyol metabolism; glycerol degradation via glycerol kinase pathway; sn-glycerol 3-phosphate from glycerol: step 1/1. Its activity is regulated as follows. Activated by phosphorylation and inhibited by fructose 1,6-bisphosphate (FBP). Key enzyme in the regulation of glycerol uptake and metabolism. Catalyzes the phosphorylation of glycerol to yield sn-glycerol 3-phosphate. The chain is Glycerol kinase from Listeria monocytogenes serovar 1/2a (strain ATCC BAA-679 / EGD-e).